A 220-amino-acid polypeptide reads, in one-letter code: Deoxyribose-phosphate aldolase (220 aa).

Aspartate 92 serves as the catalytic Proton donor/acceptor. Lysine 155 (schiff-base intermediate with acetaldehyde) is an active-site residue. Lysine 184 serves as the catalytic Proton donor/acceptor.

The protein belongs to the DeoC/FbaB aldolase family. DeoC type 1 subfamily.

Its subcellular location is the cytoplasm. The enzyme catalyses 2-deoxy-D-ribose 5-phosphate = D-glyceraldehyde 3-phosphate + acetaldehyde. It functions in the pathway carbohydrate degradation; 2-deoxy-D-ribose 1-phosphate degradation; D-glyceraldehyde 3-phosphate and acetaldehyde from 2-deoxy-alpha-D-ribose 1-phosphate: step 2/2. In terms of biological role, catalyzes a reversible aldol reaction between acetaldehyde and D-glyceraldehyde 3-phosphate to generate 2-deoxy-D-ribose 5-phosphate. In Symbiobacterium thermophilum (strain DSM 24528 / JCM 14929 / IAM 14863 / T), this protein is Deoxyribose-phosphate aldolase.